Here is a 311-residue protein sequence, read N- to C-terminus: Probable manganese-dependent inorganic pyrophosphatase (311 aa).

The Mn(2+) site is built by His9, Asp13, Asp15, Asp77, His99, and Asp151.

The protein belongs to the PPase class C family. The cofactor is Mn(2+).

It localises to the cytoplasm. The enzyme catalyses diphosphate + H2O = 2 phosphate + H(+). This Streptococcus sanguinis (strain SK36) protein is Probable manganese-dependent inorganic pyrophosphatase.